We begin with the raw amino-acid sequence, 404 residues long: Multidrug resistance protein MdtG (404 aa).

11 helical membrane-spanning segments follow: residues 19–39 (LGCFLTGAAFSLVMPFLPLYV), 56–76 (LVFSITFLFSAIASPFWGGLA), 90–110 (LGMAIVMLLMGMAQNIWQFLI), 113–133 (ALLGLLGGFIPNANALIATQV), 144–164 (TLSTGGVSGALLGPLAGGLLA), 171–191 (PVFFITASVLFICFLLTFFFI), 222–242 (LFVTTLIIQVATGSIAPILTL), 254–274 (IAFISGMIASVPGVAALLSAP), 288–308 (ILIVALIISVLLLIPMSFVQT), 317–337 (FLLGAADGALLPAVQTLLVYN), and 376–396 (AVFCVTAGVVLFNAIYSWNSL).

This sequence belongs to the major facilitator superfamily. DHA1 family. MdtG (TC 2.A.1.2.20) subfamily.

The protein localises to the cell inner membrane. The polypeptide is Multidrug resistance protein MdtG (Salmonella dublin (strain CT_02021853)).